The following is a 228-amino-acid chain: Ankyrin repeat domain-containing protein 46 (228 aa).

ANK repeat units follow at residues Gln-11 to Ile-40, Arg-44 to Thr-74, Gln-77 to Ile-103, and Gln-107 to Gly-138. A helical membrane pass occupies residues Val-195–Gly-215.

Its subcellular location is the membrane. The protein is Ankyrin repeat domain-containing protein 46 (Ankrd46) of Mus musculus (Mouse).